We begin with the raw amino-acid sequence, 163 residues long: NADH-quinone oxidoreductase subunit I (163 aa).

4Fe-4S ferredoxin-type domains follow at residues 53-83 (LRRY…IEAG) and 94-123 (VRYD…EGPN). The [4Fe-4S] cluster site is built by cysteine 63, cysteine 66, cysteine 69, cysteine 73, cysteine 103, cysteine 106, cysteine 109, and cysteine 113.

It belongs to the complex I 23 kDa subunit family. NDH-1 is composed of 14 different subunits. Subunits NuoA, H, J, K, L, M, N constitute the membrane sector of the complex. It depends on [4Fe-4S] cluster as a cofactor.

Its subcellular location is the cell inner membrane. It catalyses the reaction a quinone + NADH + 5 H(+)(in) = a quinol + NAD(+) + 4 H(+)(out). NDH-1 shuttles electrons from NADH, via FMN and iron-sulfur (Fe-S) centers, to quinones in the respiratory chain. The immediate electron acceptor for the enzyme in this species is believed to be ubiquinone. Couples the redox reaction to proton translocation (for every two electrons transferred, four hydrogen ions are translocated across the cytoplasmic membrane), and thus conserves the redox energy in a proton gradient. This Bartonella henselae (strain ATCC 49882 / DSM 28221 / CCUG 30454 / Houston 1) (Rochalimaea henselae) protein is NADH-quinone oxidoreductase subunit I.